We begin with the raw amino-acid sequence, 361 residues long: UDP-N-acetylglucosamine--N-acetylmuramyl-(pentapeptide) pyrophosphoryl-undecaprenol N-acetylglucosamine transferase (361 aa).

UDP-N-acetyl-alpha-D-glucosamine-binding positions include 11-13 (TGG), Asn124, Arg164, Ser192, and Gln295.

The protein belongs to the glycosyltransferase 28 family. MurG subfamily.

The protein resides in the cell membrane. It catalyses the reaction di-trans,octa-cis-undecaprenyl diphospho-N-acetyl-alpha-D-muramoyl-L-alanyl-D-glutamyl-meso-2,6-diaminopimeloyl-D-alanyl-D-alanine + UDP-N-acetyl-alpha-D-glucosamine = di-trans,octa-cis-undecaprenyl diphospho-[N-acetyl-alpha-D-glucosaminyl-(1-&gt;4)]-N-acetyl-alpha-D-muramoyl-L-alanyl-D-glutamyl-meso-2,6-diaminopimeloyl-D-alanyl-D-alanine + UDP + H(+). It participates in cell wall biogenesis; peptidoglycan biosynthesis. Cell wall formation. Catalyzes the transfer of a GlcNAc subunit on undecaprenyl-pyrophosphoryl-MurNAc-pentapeptide (lipid intermediate I) to form undecaprenyl-pyrophosphoryl-MurNAc-(pentapeptide)GlcNAc (lipid intermediate II). The protein is UDP-N-acetylglucosamine--N-acetylmuramyl-(pentapeptide) pyrophosphoryl-undecaprenol N-acetylglucosamine transferase of Deinococcus geothermalis (strain DSM 11300 / CIP 105573 / AG-3a).